We begin with the raw amino-acid sequence, 281 residues long: UPF0162 protein XF_1494 (281 aa).

TPR repeat units follow at residues V193–Q226 and P227–T260.

The protein belongs to the UPF0162 family.

The chain is UPF0162 protein XF_1494 from Xylella fastidiosa (strain 9a5c).